Reading from the N-terminus, the 307-residue chain is Nucleotide-binding protein Sca_0414 (307 aa).

Glycine 19 to serine 26 contacts ATP. Aspartate 70–glycine 73 lines the GTP pocket.

Belongs to the RapZ-like family.

Its function is as follows. Displays ATPase and GTPase activities. The polypeptide is Nucleotide-binding protein Sca_0414 (Staphylococcus carnosus (strain TM300)).